A 356-amino-acid chain; its full sequence is Alanine racemase (356 aa).

Catalysis depends on Lys-35, which acts as the Proton acceptor; specific for D-alanine. Lys-35 carries the N6-(pyridoxal phosphate)lysine modification. Arg-130 provides a ligand contact to substrate. Tyr-253 serves as the catalytic Proton acceptor; specific for L-alanine. Met-301 serves as a coordination point for substrate.

The protein belongs to the alanine racemase family. It depends on pyridoxal 5'-phosphate as a cofactor.

It carries out the reaction L-alanine = D-alanine. The protein operates within amino-acid biosynthesis; D-alanine biosynthesis; D-alanine from L-alanine: step 1/1. Catalyzes the interconversion of L-alanine and D-alanine. May also act on other amino acids. The sequence is that of Alanine racemase (alr) from Paraburkholderia phytofirmans (strain DSM 17436 / LMG 22146 / PsJN) (Burkholderia phytofirmans).